The primary structure comprises 523 residues: Rho guanine nucleotide exchange factor 8 (523 aa).

The segment covering 44 to 57 (VESNTPESQNSDSF) has biased composition (polar residues). Disordered regions lie at residues 44–83 (VESN…ERQQ) and 442–523 (ETSD…KDRH). Positions 76–440 (GKRSERQQAD…TLALKQTLLA (365 aa)) constitute a PRONE domain. Basic and acidic residues predominate over residues 465–475 (EAEKHDPHSKT).

In terms of assembly, homodimer. The homodimer interacts with ARAC5/ROP4. Interacts with ARAC11/ROP1 and ARAC10/ROP11. Interacts with PRK6. Expressed in pollen grains and pollen tubes.

The protein resides in the cell membrane. In terms of biological role, guanine-nucleotide exchange factor (GEF) that acts as an activator of Rop (Rho of plants) GTPases by promoting the exchange of GDP for GTP. Active as homodimer. In Arabidopsis thaliana (Mouse-ear cress), this protein is Rho guanine nucleotide exchange factor 8.